The primary structure comprises 209 residues: V-type ATP synthase subunit D 2 (209 aa).

It belongs to the V-ATPase D subunit family.

Functionally, produces ATP from ADP in the presence of a proton gradient across the membrane. The polypeptide is V-type ATP synthase subunit D 2 (atpD2) (Treponema pallidum (strain Nichols)).